Consider the following 165-residue polypeptide: Chorismate pyruvate-lyase (165 aa).

Residues Met-35, Arg-77, Leu-115, and Glu-156 each contribute to the substrate site.

This sequence belongs to the UbiC family. Monomer.

Its subcellular location is the cytoplasm. The catalysed reaction is chorismate = 4-hydroxybenzoate + pyruvate. It functions in the pathway cofactor biosynthesis; ubiquinone biosynthesis. Its function is as follows. Removes the pyruvyl group from chorismate, with concomitant aromatization of the ring, to provide 4-hydroxybenzoate (4HB) for the ubiquinone pathway. The sequence is that of Chorismate pyruvate-lyase from Escherichia coli O7:K1 (strain IAI39 / ExPEC).